The following is a 126-amino-acid chain: MAREQTEVRELDEGSYVMIEDTPCKINSYSTAKPGKHGSAKARIDAKGVFDGKKRSLSQPVDAKVWVPIVNRKQGQVVSTDGNDAQVMDLDTYDTFTMRVPEDIDLQPDDEIEYLQYEEQRKITRS.

Lys36 is modified (hypusine).

Belongs to the eIF-5A family.

It localises to the cytoplasm. In terms of biological role, functions by promoting the formation of the first peptide bond. The chain is Translation initiation factor 5A from Haloarcula marismortui (strain ATCC 43049 / DSM 3752 / JCM 8966 / VKM B-1809) (Halobacterium marismortui).